Consider the following 432-residue polypeptide: MSGYARRQGAPPLSRTRSLVVPDAPAFYERRSCLPQLDCERPHGGDLHPHLFGFRPTFMCYVPSPVLASVGDTGFGYGKGKCTNQGPSGAPETRFGGDKLEDLEEANPFSFKEFLKTKNLSLSKEDTTTSRIYPKEASRHPLGLEHSSPASQLMGYGLESQQPFFEDPTRASNLEEDEDDGWNITYLPSAVDQTHSSRDTQDSPPCDTYLSFFSNSSELACPESLPPWTLSDTDSRISPASPAGSPNADFAAHEESLGDRHLRTLQISYEALKDENSKLRRKLNEVQSFSETQTEMVRTLERKLEAKMIKEESDFHDLESVVQQVEQNLELMTKRAVKAENHVLKLKQEINLLQAQLSNLRRENEALRSGQGASLSVVKQNTDVALQNLHLVMNSAHASIKQLVSGADTLNLVAEILKSIDRISEVKDEVDS.

At serine 18 the chain carries Phosphoserine. Residues aspartate 126 to glycine 143 show a composition bias toward basic and acidic residues. A disordered region spans residues aspartate 126–glutamate 145. At serine 148 the chain carries Phosphoserine. Positions leucine 174–serine 196 are required for interaction with PTPN13. Positions proline 226–phenylalanine 250 are disordered. Residues serine 241 and serine 245 each carry the phosphoserine modification. 2 coiled-coil regions span residues leucine 262–phenylalanine 289 and phenylalanine 315–glycine 370.

This sequence belongs to the ENTR1 family. Found in a complex with ENTR1, PTPN13 and GIT1. Interacts with PTPN13 (via the FERM domain). Interacts (via N-terminus) with GIT1 (via N- and C-terminus); this interaction is direct. Interacts with NOD2. Interacts (via N-terminus) with IFT88. Interacts with VPS35. Post-translationally, phosphorylated.

It localises to the cytoplasm. The protein localises to the early endosome. Its subcellular location is the endosome. It is found in the recycling endosome. The protein resides in the midbody. It localises to the cytoskeleton. The protein localises to the microtubule organizing center. Its subcellular location is the centrosome. It is found in the cilium basal body. May be involved in modulation of TNF response. May be involved in presentation of TNFRSF1A on the cell surface. Involved in the endosome-to-plasma membrane trafficking and recycling of SNX27-retromer-dependent cargo proteins, such as GLUT1. Involved in the regulation of cytokinesis; the function may involve PTPN13 and GIT1. In terms of biological role, endosome-associated protein that plays a role in membrane receptor sorting, cytokinesis and ciliogenesis. Involved in the endosome-to-plasma membrane trafficking and recycling of SNX27-retromer-dependent cargo proteins, such as GLUT1. Involved in the regulation of cytokinesis; the function may involve PTPN13 and GIT1. Plays a role in the formation of cilia. Involved in cargo protein localization, such as PKD2, at primary cilia. Involved in the presentation of the tumor necrosis factor (TNF) receptor TNFRSF1A on the cell surface, and hence in the modulation of the TNF-induced apoptosis. The protein is Endosome-associated-trafficking regulator 1 of Mus musculus (Mouse).